Reading from the N-terminus, the 867-residue chain is MFFEILIGASAKAVKDFISHCYSRLKSIYYSFKRWLMEISGQFKAHDAFVNMCFGHMADIEDFEAELAEEFAEREDEVEEARSLLKLLVAQKSKTGVTEAWTDFFTKSRGGVYAPLSCEPTRQELEAKSEKLEKLLEEQHQFEVRAAKKYIKEKGRGFINCWNDLRSRLRLVKDVKDEAKDNARAAAKIGAEMFAPVDVQDLYSFTEVKKVETGLMKEVVKERNGEEEKHLEPIMEEVRSIKDTAEARDAASTWITETVKLKNSTLNADELSLATIARYVENVGDKFKLDIASKTYLKQVASMSVPIPTNKDIKLKMVLQSPEARARREPLDVLDSVGFLEGLCTASGFESPFPILGLPEIAVTDGARLRKVSSNIRYLSQTHLGLVYKAPNASLHNALVAVERRVFTVGKGDKAIYPPRPEHDIFTDTMDYFQKSIIEEVGYCRTYPAQLLANSYSAGKRAMYHKAIASLRTVPYHQKDANVQAFLKKEKHWMTKDIAPRLICPRSKRYNIILGTRLKFNEKKIMHAIDSVFGSPTVLSGYDNFKQGRIIAKKWQKFACPVAIGVDASRFDQHVSEQALKWEHGIYNGIFGDSELALALEHQITNNIKMFVEDKMLRFKVRGHRMSGDINTSMGNKLIMCGMMHAYFKKLGVEAELCNNGDDCVIITDRANEKLFDGMYDHFLQYGFNMVTEKPVYELEQLEFCQSKPVSINGKYRMVRRPDSIGKDSTTLLSMLNQSDVKSYMSAVAQCGLVLNAGVPILESFYKCLYRSSGYKKVSEEFIKNVISYGTDERLQGRRTYNETPITNHSRMSYWESFGVDPKIQQIVERYYDGLTVSAQLQSVKVTTPHLQSILLSIPENHSQIEY.

A RdRp catalytic domain is found at 561–676 (PVAIGVDASR…ITDRANEKLF (116 aa)).

This sequence belongs to the luteoviruses RNA polymerase family.

The catalysed reaction is RNA(n) + a ribonucleoside 5'-triphosphate = RNA(n+1) + diphosphate. Its function is as follows. Probable polymerase. The polypeptide is Putative RNA-directed RNA polymerase (Barley yellow dwarf virus (isolate P-PAV) (BYDV)).